The chain runs to 340 residues: Ketol-acid reductoisomerase (NADP(+)) (340 aa).

The 180-residue stretch at 2–181 folds into the KARI N-terminal Rossmann domain; sequence AKVFYNGDIN…GSARAGVIET (180 aa). NADP(+) contacts are provided by residues 25–28, arginine 48, serine 52, and 82–85; these read YGSQ and DEHQ. Histidine 107 is an active-site residue. Glycine 133 provides a ligand contact to NADP(+). One can recognise a KARI C-terminal knotted domain in the interval 182–327; sequence TFQEETETDL…RELREMMPFV (146 aa). Residues aspartate 190, glutamate 194, glutamate 226, and glutamate 230 each contribute to the Mg(2+) site. Serine 251 contacts substrate.

It belongs to the ketol-acid reductoisomerase family. Requires Mg(2+) as cofactor.

It catalyses the reaction (2R)-2,3-dihydroxy-3-methylbutanoate + NADP(+) = (2S)-2-acetolactate + NADPH + H(+). It carries out the reaction (2R,3R)-2,3-dihydroxy-3-methylpentanoate + NADP(+) = (S)-2-ethyl-2-hydroxy-3-oxobutanoate + NADPH + H(+). Its pathway is amino-acid biosynthesis; L-isoleucine biosynthesis; L-isoleucine from 2-oxobutanoate: step 2/4. It participates in amino-acid biosynthesis; L-valine biosynthesis; L-valine from pyruvate: step 2/4. In terms of biological role, involved in the biosynthesis of branched-chain amino acids (BCAA). Catalyzes an alkyl-migration followed by a ketol-acid reduction of (S)-2-acetolactate (S2AL) to yield (R)-2,3-dihydroxy-isovalerate. In the isomerase reaction, S2AL is rearranged via a Mg-dependent methyl migration to produce 3-hydroxy-3-methyl-2-ketobutyrate (HMKB). In the reductase reaction, this 2-ketoacid undergoes a metal-dependent reduction by NADPH to yield (R)-2,3-dihydroxy-isovalerate. The protein is Ketol-acid reductoisomerase (NADP(+)) of Halalkalibacterium halodurans (strain ATCC BAA-125 / DSM 18197 / FERM 7344 / JCM 9153 / C-125) (Bacillus halodurans).